Here is a 205-residue protein sequence, read N- to C-terminus: SREBP regulating gene protein (205 aa).

The Cytoplasmic portion of the chain corresponds to 1–16; that stretch reads MVNLAAMVWRRLLRKR. A helical transmembrane segment spans residues 17–35; the sequence is WVLALVFGLSLVYFLSSTF. Over 36–205 the chain is Lumenal; sequence KQEERAVRDR…GESPPELFPA (170 aa). Asparagine 67 carries N-linked (GlcNAc...) asparagine glycosylation.

Belongs to the SPRING family. Interacts with SCAP.

Its subcellular location is the golgi apparatus membrane. Its function is as follows. Positively regulates hepatic SREBP signaling pathway by modulating the proper localization of SCAP (SREBP cleavage-activating protein) to the endoplasmic reticulum, thereby controlling the level of functional SCAP. This chain is SREBP regulating gene protein, found in Homo sapiens (Human).